The following is a 138-amino-acid chain: Large ribosomal subunit protein uL16 (138 aa).

Belongs to the universal ribosomal protein uL16 family. In terms of assembly, part of the 50S ribosomal subunit.

Its function is as follows. Binds 23S rRNA and is also seen to make contacts with the A and possibly P site tRNAs. The protein is Large ribosomal subunit protein uL16 of Rubrobacter xylanophilus (strain DSM 9941 / JCM 11954 / NBRC 16129 / PRD-1).